The chain runs to 421 residues: Testin (421 aa).

The 108-residue stretch at 92-199 (MILTNPVAAK…GDVKLPRDMN (108 aa)) folds into the PET domain. Disordered stretches follow at residues 133-164 (EKQP…PSKC) and 193-213 (KLPR…GGDR). The segment covering 155–164 (PAHDQDPSKC) has biased composition (basic and acidic residues). LIM zinc-binding domains lie at 234–297 (YSCY…CDSE), 299–359 (PRCA…NHAV), and 362–421 (QGCH…KMMS).

It belongs to the prickle / espinas / testin family. Interacts via LIM domain 1 with ZYX. Interacts (via LIM domain 3) with ENAH and VASP. Interacts with ALKBH4, talin, actin, alpha-actinin, GRIP1 and PXN. Interacts (via LIM domain 2) with ACTL7A (via N-terminus). Heterodimer with ACTL7A; the heterodimer interacts with ENAH to form a heterotrimer.

It localises to the cytoplasm. It is found in the cell junction. The protein resides in the focal adhesion. Scaffold protein that may play a role in cell adhesion, cell spreading and in the reorganization of the actin cytoskeleton. Plays a role in the regulation of cell proliferation. May act as a tumor suppressor. The protein is Testin (TES) of Muntiacus muntjak (Barking deer).